Reading from the N-terminus, the 287-residue chain is Lipoyl synthase (287 aa).

The [4Fe-4S] cluster site is built by Cys38, Cys43, Cys49, Cys64, Cys68, Cys71, and Ser277. The 217-residue stretch at 50–266 (WSRGTATFLL…KTVAESLGLR (217 aa)) folds into the Radical SAM core domain.

The protein belongs to the radical SAM superfamily. Lipoyl synthase family. The cofactor is [4Fe-4S] cluster.

It is found in the cytoplasm. It carries out the reaction [[Fe-S] cluster scaffold protein carrying a second [4Fe-4S](2+) cluster] + N(6)-octanoyl-L-lysyl-[protein] + 2 oxidized [2Fe-2S]-[ferredoxin] + 2 S-adenosyl-L-methionine + 4 H(+) = [[Fe-S] cluster scaffold protein] + N(6)-[(R)-dihydrolipoyl]-L-lysyl-[protein] + 4 Fe(3+) + 2 hydrogen sulfide + 2 5'-deoxyadenosine + 2 L-methionine + 2 reduced [2Fe-2S]-[ferredoxin]. It participates in protein modification; protein lipoylation via endogenous pathway; protein N(6)-(lipoyl)lysine from octanoyl-[acyl-carrier-protein]: step 2/2. In terms of biological role, catalyzes the radical-mediated insertion of two sulfur atoms into the C-6 and C-8 positions of the octanoyl moiety bound to the lipoyl domains of lipoate-dependent enzymes, thereby converting the octanoylated domains into lipoylated derivatives. This is Lipoyl synthase from Chlorobium phaeobacteroides (strain DSM 266 / SMG 266 / 2430).